A 237-amino-acid polypeptide reads, in one-letter code: Octanoyltransferase (237 aa).

The BPL/LPL catalytic domain occupies 27 to 210 (SGGDDILLLL…EFYHIFQPAG (184 aa)). Residues 72-79 (RGGNVTCH), 139-141 (SLG), and 152-154 (GMA) contribute to the substrate site. Cys-170 serves as the catalytic Acyl-thioester intermediate.

This sequence belongs to the LipB family.

The protein localises to the cytoplasm. The catalysed reaction is octanoyl-[ACP] + L-lysyl-[protein] = N(6)-octanoyl-L-lysyl-[protein] + holo-[ACP] + H(+). It participates in protein modification; protein lipoylation via endogenous pathway; protein N(6)-(lipoyl)lysine from octanoyl-[acyl-carrier-protein]: step 1/2. Catalyzes the transfer of endogenously produced octanoic acid from octanoyl-acyl-carrier-protein onto the lipoyl domains of lipoate-dependent enzymes. Lipoyl-ACP can also act as a substrate although octanoyl-ACP is likely to be the physiological substrate. In Desulfovibrio desulfuricans (strain ATCC 27774 / DSM 6949 / MB), this protein is Octanoyltransferase.